The primary structure comprises 157 residues: Protein-export protein SecB (157 aa).

This sequence belongs to the SecB family. In terms of assembly, homotetramer, a dimer of dimers. One homotetramer interacts with 1 SecA dimer.

It localises to the cytoplasm. Its function is as follows. One of the proteins required for the normal export of preproteins out of the cell cytoplasm. It is a molecular chaperone that binds to a subset of precursor proteins, maintaining them in a translocation-competent state. It also specifically binds to its receptor SecA. The sequence is that of Protein-export protein SecB from Photobacterium profundum (strain SS9).